Consider the following 380-residue polypeptide: Phospho-N-acetylmuramoyl-pentapeptide-transferase (380 aa).

A run of 11 helical transmembrane segments spans residues 26-46 (IVAA…LFIE), 75-95 (MGGA…ADLG), 98-118 (LVWA…WDDW), 135-155 (LVLQ…DWQP), 160-180 (GFPF…PFVP), 183-203 (LFSP…VVAT), 222-242 (IVSS…IAGF), 259-279 (LGVF…YNTY), 283-303 (VFMG…LAVL), 311-331 (AILH…VWSF), and 357-377 (KIIV…LMSL).

This sequence belongs to the glycosyltransferase 4 family. MraY subfamily. It depends on Mg(2+) as a cofactor.

It is found in the cell inner membrane. The enzyme catalyses UDP-N-acetyl-alpha-D-muramoyl-L-alanyl-gamma-D-glutamyl-meso-2,6-diaminopimeloyl-D-alanyl-D-alanine + di-trans,octa-cis-undecaprenyl phosphate = di-trans,octa-cis-undecaprenyl diphospho-N-acetyl-alpha-D-muramoyl-L-alanyl-D-glutamyl-meso-2,6-diaminopimeloyl-D-alanyl-D-alanine + UMP. The protein operates within cell wall biogenesis; peptidoglycan biosynthesis. Its function is as follows. Catalyzes the initial step of the lipid cycle reactions in the biosynthesis of the cell wall peptidoglycan: transfers peptidoglycan precursor phospho-MurNAc-pentapeptide from UDP-MurNAc-pentapeptide onto the lipid carrier undecaprenyl phosphate, yielding undecaprenyl-pyrophosphoryl-MurNAc-pentapeptide, known as lipid I. The chain is Phospho-N-acetylmuramoyl-pentapeptide-transferase from Anaeromyxobacter sp. (strain Fw109-5).